The following is a 96-amino-acid chain: UPF0251 protein Spea_3639 (96 aa).

The protein belongs to the UPF0251 family.

The protein is UPF0251 protein Spea_3639 of Shewanella pealeana (strain ATCC 700345 / ANG-SQ1).